The following is a 488-amino-acid chain: Glutamyl-tRNA(Gln) amidotransferase subunit A (488 aa).

Catalysis depends on charge relay system residues Lys-77 and Ser-152. The active-site Acyl-ester intermediate is Ser-176.

Belongs to the amidase family. GatA subfamily. As to quaternary structure, heterotrimer of A, B and C subunits.

The enzyme catalyses L-glutamyl-tRNA(Gln) + L-glutamine + ATP + H2O = L-glutaminyl-tRNA(Gln) + L-glutamate + ADP + phosphate + H(+). Functionally, allows the formation of correctly charged Gln-tRNA(Gln) through the transamidation of misacylated Glu-tRNA(Gln) in organisms which lack glutaminyl-tRNA synthetase. The reaction takes place in the presence of glutamine and ATP through an activated gamma-phospho-Glu-tRNA(Gln). This Streptococcus thermophilus (strain CNRZ 1066) protein is Glutamyl-tRNA(Gln) amidotransferase subunit A.